Reading from the N-terminus, the 689-residue chain is Quinidine resistance protein 3 (689 aa).

Residues 1–24 (MQAQGSQSNVGSLRSNCSDNSLPN) are compositionally biased toward polar residues. Residues 1-73 (MQAQGSQSNV…DNQLSRLKSE (73 aa)) form a disordered region. Residues 1-108 (MQAQGSQSNV…RDYPPMMKKM (108 aa)) lie on the Extracellular side of the membrane. Basic and acidic residues-rich tracts occupy residues 29–51 (MHCD…EKTN) and 59–73 (SREH…LKSE). Residues 109-131 (IVFLIAFSSMMGPMGTSIIFPAI) form a helical membrane-spanning segment. At 132–139 (NSITTEFK) the chain is on the cytoplasmic side. Residues 140-163 (TSVIMVNVSIGVYLLSLGVFPLWW) traverse the membrane as a helical segment. The Extracellular segment spans residues 164–175 (SSLSELEGRRTT). Residues 176-193 (YITSFALLFAFNIGSALA) traverse the membrane as a helical segment. The Cytoplasmic segment spans residues 194 to 235 (PDINSFIALRMLCGAASASVQSVGAGTVADLYISEDRGKNLS). Residues 236-256 (YYYLGPLLAPLLSPIFGSLLV) traverse the membrane as a helical segment. The Extracellular portion of the chain corresponds to 257 to 265 (NRWPWRSTQ). Residues 266–283 (WFMVILSGCNVILLTVLL) traverse the membrane as a helical segment. Residues 284–475 (PETLRKQDSK…KSLHFLEYPP (192 aa)) lie on the Cytoplasmic side of the membrane. At Ser-436 the chain carries Phosphoserine. A helical transmembrane segment spans residues 476–493 (VALAITFSAISFSTVYFV). The Extracellular segment spans residues 494–510 (NMTVEYKYSRPPYNFKP). The helical transmembrane segment at 511-532 (LYIGLLYIPNSVTYFFASIYGG) threads the bilayer. The Cytoplasmic portion of the chain corresponds to 533-558 (RWVDMLLKRYKEKYGILAPEARISWN). Residues 559 to 577 (VVTSVISFPIALLIFGWCL) traverse the membrane as a helical segment. Over 578-586 (DKKCHWVTP) the chain is Extracellular. The helical transmembrane segment at 587-609 (LIGTALFGYAAMMTIGATLSYLV) threads the bilayer. Topologically, residues 610–624 (DSLPGKGATGVALNN) are cytoplasmic. The helical transmembrane segment at 625–642 (LIRQILAATAVFVTTPML) threads the bilayer. At 643–648 (NGMGTG) the chain is on the extracellular side. A helical transmembrane segment spans residues 649–668 (WAFTMLAFIVLGASSVLIIL). The Cytoplasmic segment spans residues 669 to 689 (KKHGDYWRENYDLQKLYDKID).

The protein belongs to the major facilitator superfamily. CAR1 family.

The protein resides in the cell membrane. Multidrug resistance transporter involved in resistance and adaptation to quinidine and to the herbicide barban (4-chloro-2-butynyl [3-chlorophenyl] carbamate). This chain is Quinidine resistance protein 3 (QDR3), found in Saccharomyces cerevisiae (strain ATCC 204508 / S288c) (Baker's yeast).